A 620-amino-acid chain; its full sequence is Translation initiation factor IF-2 (620 aa).

The region spanning 126 to 295 (KRPPIVTIMG…IVTAEIMELK (170 aa)) is the tr-type G domain. A G1 region spans residues 135–142 (GHVDHGKT). 135 to 142 (GHVDHGKT) provides a ligand contact to GTP. Residues 160 to 164 (NITQS) form a G2 region. Residues 181–184 (DTPG) form a G3 region. GTP-binding positions include 181–185 (DTPGH) and 235–238 (NKMD). The interval 235–238 (NKMD) is G4. The segment at 271–273 (SAL) is G5.

This sequence belongs to the TRAFAC class translation factor GTPase superfamily. Classic translation factor GTPase family. IF-2 subfamily.

Its subcellular location is the cytoplasm. Its function is as follows. One of the essential components for the initiation of protein synthesis. Protects formylmethionyl-tRNA from spontaneous hydrolysis and promotes its binding to the 30S ribosomal subunits. Also involved in the hydrolysis of GTP during the formation of the 70S ribosomal complex. This chain is Translation initiation factor IF-2, found in Malacoplasma penetrans (strain HF-2) (Mycoplasma penetrans).